Reading from the N-terminus, the 207-residue chain is 2,3-bisphosphoglycerate-dependent phosphoglycerate mutase (207 aa).

Residues 10-17 (RHGQSEWN), 23-24 (TG), arginine 62, 89-92 (ERDY), lysine 100, 116-117 (RR), and 160-161 (GN) each bind substrate. The active-site Tele-phosphohistidine intermediate is the histidine 11. The Proton donor/acceptor role is filled by glutamate 89.

It belongs to the phosphoglycerate mutase family. BPG-dependent PGAM subfamily. As to quaternary structure, homodimer.

The enzyme catalyses (2R)-2-phosphoglycerate = (2R)-3-phosphoglycerate. The protein operates within carbohydrate degradation; glycolysis; pyruvate from D-glyceraldehyde 3-phosphate: step 3/5. Functionally, catalyzes the interconversion of 2-phosphoglycerate and 3-phosphoglycerate. The sequence is that of 2,3-bisphosphoglycerate-dependent phosphoglycerate mutase from Nitrobacter hamburgensis (strain DSM 10229 / NCIMB 13809 / X14).